The sequence spans 273 residues: 2,3,4,5-tetrahydropyridine-2,6-dicarboxylate N-succinyltransferase (273 aa).

Residues Arg104 and Asp141 each contribute to the substrate site.

Belongs to the transferase hexapeptide repeat family. Homotrimer.

Its subcellular location is the cytoplasm. It carries out the reaction (S)-2,3,4,5-tetrahydrodipicolinate + succinyl-CoA + H2O = (S)-2-succinylamino-6-oxoheptanedioate + CoA. Its pathway is amino-acid biosynthesis; L-lysine biosynthesis via DAP pathway; LL-2,6-diaminopimelate from (S)-tetrahydrodipicolinate (succinylase route): step 1/3. This is 2,3,4,5-tetrahydropyridine-2,6-dicarboxylate N-succinyltransferase from Psychrobacter cryohalolentis (strain ATCC BAA-1226 / DSM 17306 / VKM B-2378 / K5).